The sequence spans 392 residues: F-box protein At5g65850 (392 aa).

An F-box domain is found at 29–78 (TEKSVQIPVDIIIEILLRLPAKSIATCRCVSKLWISVICRQDFTELFLTR).

The sequence is that of F-box protein At5g65850 from Arabidopsis thaliana (Mouse-ear cress).